The following is a 132-amino-acid chain: D-beta-hydroxybutyrate dehydrogenase, mitochondrial (132 aa).

Residue 3–27 participates in NAD(+) binding; sequence LVTGCDSGFGFSLAKHLHSKGFLVF. Lys17 carries the post-translational modification N6-acetyllysine. Ser59 provides a ligand contact to substrate. Catalysis depends on Tyr66, which acts as the Proton acceptor. An N6-acetyllysine modification is found at Lys70. The O-linked (GlcNAc) serine glycan is linked to Ser77. Ser104 carries the post-translational modification Phosphoserine.

This sequence belongs to the short-chain dehydrogenases/reductases (SDR) family. In terms of assembly, homotetramer.

Its subcellular location is the mitochondrion inner membrane. The protein resides in the mitochondrion matrix. The catalysed reaction is (R)-3-hydroxybutanoate + NAD(+) = acetoacetate + NADH + H(+). With respect to regulation, requires phosphatidylcholine as an allosteric activator for enzymatic activity. This chain is D-beta-hydroxybutyrate dehydrogenase, mitochondrial, found in Mesocricetus auratus (Golden hamster).